Here is a 186-residue protein sequence, read N- to C-terminus: Elongation factor P (186 aa).

Belongs to the elongation factor P family.

It is found in the cytoplasm. It functions in the pathway protein biosynthesis; polypeptide chain elongation. Its function is as follows. Involved in peptide bond synthesis. Stimulates efficient translation and peptide-bond synthesis on native or reconstituted 70S ribosomes in vitro. Probably functions indirectly by altering the affinity of the ribosome for aminoacyl-tRNA, thus increasing their reactivity as acceptors for peptidyl transferase. In Pelagibacter ubique (strain HTCC1062), this protein is Elongation factor P.